A 201-amino-acid chain; its full sequence is Small ribosomal subunit protein uS4 (201 aa).

The 64-residue stretch at 91–154 (SRLDNVIYRA…QKMEWFEEAQ (64 aa)) folds into the S4 RNA-binding domain.

The protein belongs to the universal ribosomal protein uS4 family. Part of the 30S ribosomal subunit. Contacts protein S5. The interaction surface between S4 and S5 is involved in control of translational fidelity.

In terms of biological role, one of the primary rRNA binding proteins, it binds directly to 16S rRNA where it nucleates assembly of the body of the 30S subunit. Its function is as follows. With S5 and S12 plays an important role in translational accuracy. The chain is Small ribosomal subunit protein uS4 from Corynebacterium aurimucosum (strain ATCC 700975 / DSM 44827 / CIP 107346 / CN-1) (Corynebacterium nigricans).